Reading from the N-terminus, the 115-residue chain is MCSPTQPTLAAGNVVDQLKRAGSAEEFFTLLGVCFDPKVLDVARLHILKRMGQYLASEDLEAMPNSVAAARCKAVLERAYEDFLTSTPLDQRVFKVLKDAVAPKKTHFVPLETLK.

This sequence belongs to the NifW family. In terms of assembly, homotrimer; associates with NifD.

May protect the nitrogenase Fe-Mo protein from oxidative damage. The chain is Nitrogenase-stabilizing/protective protein NifW from Rhodopseudomonas palustris (strain BisB18).